A 299-amino-acid chain; its full sequence is Trans-aconitate 3-methyltransferase (299 aa).

The residue at position 2 (Ser2) is an N-acetylserine.

It belongs to the methyltransferase superfamily. Tam family.

It is found in the cytoplasm. The enzyme catalyses trans-aconitate + S-adenosyl-L-methionine = (E)-2-(methoxycarbonylmethyl)but-2-enedioate + S-adenosyl-L-homocysteine. Its function is as follows. Catalyzes the S-adenosylmethionine monomethyl esterification of trans-aconitate and 3-isopropylmalate at high affinity and of other molecules like cis-aconitate, isocitrate, and citrate at lower velocities and affinities. The function of trans-aconitate methylation appears to be in reducing the toxicity of this spontaneous breakdown product of cis-aconitate. The role of 3-isopropylmalate methylation is unclear but may represent a metabolic branch at 3-isopropylmalate, where some of the material is taken in the pathway leading to leucine and some is taken in a pathway to the 3-isopropylmalate methyl ester, a molecule that provides a signal to switch from vegetative to invasive growth in response to amino acid starvation. The polypeptide is Trans-aconitate 3-methyltransferase (TMT1) (Saccharomyces cerevisiae (strain YJM789) (Baker's yeast)).